A 707-amino-acid polypeptide reads, in one-letter code: Polyribonucleotide nucleotidyltransferase (707 aa).

Residues Asp485 and Asp491 each coordinate Mg(2+). Residues 552–611 (PRIYTMKIDPKKIKDVIGKGGATIRTLTEETGTSIDIDDDGTVKIAAIDGNAVKEVMARI) enclose the KH domain. Positions 621–689 (GAVYTGKVTR…RQGRIRLTMK (69 aa)) constitute an S1 motif domain.

The protein belongs to the polyribonucleotide nucleotidyltransferase family. Component of the RNA degradosome, which is a multiprotein complex involved in RNA processing and mRNA degradation. Requires Mg(2+) as cofactor.

The protein localises to the cytoplasm. The enzyme catalyses RNA(n+1) + phosphate = RNA(n) + a ribonucleoside 5'-diphosphate. Functionally, involved in mRNA degradation. Catalyzes the phosphorolysis of single-stranded polyribonucleotides processively in the 3'- to 5'-direction. This chain is Polyribonucleotide nucleotidyltransferase, found in Actinobacillus succinogenes (strain ATCC 55618 / DSM 22257 / CCUG 43843 / 130Z).